We begin with the raw amino-acid sequence, 420 residues long: L-rhamnose isomerase (420 aa).

Mn(2+) contacts are provided by histidine 264, aspartate 296, and aspartate 298.

Belongs to the rhamnose isomerase family. It depends on Mn(2+) as a cofactor.

It is found in the cytoplasm. The enzyme catalyses L-rhamnopyranose = L-rhamnulose. It participates in carbohydrate degradation; L-rhamnose degradation; glycerone phosphate from L-rhamnose: step 1/3. Functionally, catalyzes the interconversion of L-rhamnose and L-rhamnulose. This Listeria monocytogenes serovar 1/2a (strain ATCC BAA-679 / EGD-e) protein is L-rhamnose isomerase.